We begin with the raw amino-acid sequence, 425 residues long: 5-aminovalerate aminotransferase DavT (425 aa).

Pyridoxal 5'-phosphate contacts are provided by residues 112-113 (GS), Tyr-139, and 240-243 (DEVQ). Lys-269 carries the post-translational modification N6-(pyridoxal phosphate)lysine. Thr-298 is a pyridoxal 5'-phosphate binding site.

Belongs to the class-III pyridoxal-phosphate-dependent aminotransferase family. Pyridoxal 5'-phosphate is required as a cofactor.

It catalyses the reaction 5-aminopentanoate + 2-oxoglutarate = 5-oxopentanoate + L-glutamate. Its function is as follows. Catalyzes the conversion of 5-aminovalerate to 5-oxopentanoate. The polypeptide is 5-aminovalerate aminotransferase DavT (davT) (Pseudomonas putida (strain ATCC 47054 / DSM 6125 / CFBP 8728 / NCIMB 11950 / KT2440)).